We begin with the raw amino-acid sequence, 909 residues long: WD repeat-containing protein 20 homolog (909 aa).

A disordered region spans residues 58–132 (SPAQGKLGSD…SAGNNTVEAR (75 aa)). Low complexity-rich tracts occupy residues 80 to 107 (GANTTTTNGSSPGASPTGAAGASTAISN) and 115 to 127 (SHSNHNSNSAGNN). WD repeat units follow at residues 248–288 (IDKT…AATA), 321–362 (TDNC…GIAR), 363–402 (SYFGGFLCVCWSPDGKYIVVGGEDDLVTVWSLHERRVVAR), and 470–517 (ADRN…LRHP). Disordered regions lie at residues 458–483 (FEGFDRNSTPVHADRNGPHSASFRSD), 554–628 (SGQA…AGSV), 661–699 (SDSIDGGGGSGSGQRPSQTTSGYNSKTSNSSNKSSNSGS), 720–739 (SEKKGAGYEGSHSTAHRQHR), and 749–775 (NQHNHTGGHNNHSQSNNSSSSNFGHSS). Composition is skewed to polar residues over residues 555–569 (GQATGQQAESGSCSP) and 595–606 (TANCTISSQSSP). Low complexity-rich tracts occupy residues 612–628 (EAATPASTSSNAGAGSV) and 673–699 (GQRPSQTTSGYNSKTSNSSNKSSNSGS). One copy of the WD 5 repeat lies at 856–893 (IAHERLTALIFREDCFLTACQDGFIYTWARPGHATHAT).

In terms of assembly, component of the Usp12-46 deubiquitylase complex consisting of Usp12-46, Wdr20 and Uaf1; regulatory subunit that, together with Uaf1, stabilizes Usp12-46. The Usp12-46 deubiquitylase complex associates with arr/arrow; the interaction leads to deubiquitination and stabilization of arr/arrow.

Functionally, regulatory component of the Usp12-46 deubiquitylase complex. This complex deubiquitylates the wg/wingless-signaling receptor arr/arrow, which stabilizes the receptor and increases its concentration at the cell surface; this enhances the sensitivity of cells to wg/wingless-signal stimulation. This increases the amplitude and spatial range of the signaling response to the wg/wingless morphogen gradient, facilitating the precise concentration-dependent regulation of its target genes. Required for wg/wingless-mediated signaling in the wing imaginal disc and for wg/wingless-dependent regulation of intestinal stem cell proliferation. This is WD repeat-containing protein 20 homolog from Drosophila melanogaster (Fruit fly).